The chain runs to 574 residues: Potassium-transporting ATPase potassium-binding subunit (574 aa).

The next 10 membrane-spanning stretches (helical) occupy residues Ile-7–Leu-27, Ile-65–Ile-85, Phe-136–Leu-156, Leu-175–Leu-195, Phe-264–Ser-284, Trp-292–Phe-312, Gly-390–Gly-410, Met-427–Leu-447, Leu-494–Ile-514, and Gly-534–Phe-554.

The protein belongs to the KdpA family. As to quaternary structure, the system is composed of three essential subunits: KdpA, KdpB and KdpC.

The protein resides in the cell inner membrane. Functionally, part of the high-affinity ATP-driven potassium transport (or Kdp) system, which catalyzes the hydrolysis of ATP coupled with the electrogenic transport of potassium into the cytoplasm. This subunit binds the periplasmic potassium ions and delivers the ions to the membrane domain of KdpB through an intramembrane tunnel. This Methylacidiphilum infernorum (isolate V4) (Methylokorus infernorum (strain V4)) protein is Potassium-transporting ATPase potassium-binding subunit.